The primary structure comprises 366 residues: Flagellar P-ring protein (366 aa).

The N-terminal stretch at 1-24 (MWPLLLAVALSTLLPLAMPGSAGA) is a signal peptide.

It belongs to the FlgI family. As to quaternary structure, the basal body constitutes a major portion of the flagellar organelle and consists of four rings (L,P,S, and M) mounted on a central rod.

It is found in the periplasm. It localises to the bacterial flagellum basal body. Functionally, assembles around the rod to form the L-ring and probably protects the motor/basal body from shearing forces during rotation. This chain is Flagellar P-ring protein, found in Nitratidesulfovibrio vulgaris (strain ATCC 29579 / DSM 644 / CCUG 34227 / NCIMB 8303 / VKM B-1760 / Hildenborough) (Desulfovibrio vulgaris).